Reading from the N-terminus, the 247-residue chain is Triosephosphate isomerase (247 aa).

Residue N10–K12 coordinates substrate. H92 serves as the catalytic Electrophile. E164 (proton acceptor) is an active-site residue. Residues G170, S209, and G230–G231 each bind substrate.

Belongs to the triosephosphate isomerase family. In terms of assembly, homodimer.

The protein resides in the cytoplasm. The catalysed reaction is D-glyceraldehyde 3-phosphate = dihydroxyacetone phosphate. Its pathway is carbohydrate biosynthesis; gluconeogenesis. It functions in the pathway carbohydrate degradation; glycolysis; D-glyceraldehyde 3-phosphate from glycerone phosphate: step 1/1. Functionally, involved in the gluconeogenesis. Catalyzes stereospecifically the conversion of dihydroxyacetone phosphate (DHAP) to D-glyceraldehyde-3-phosphate (G3P). The sequence is that of Triosephosphate isomerase from Alcanivorax borkumensis (strain ATCC 700651 / DSM 11573 / NCIMB 13689 / SK2).